The following is a 417-amino-acid chain: Phosphoglycerate kinase 1 (417 aa).

Ser-2 carries the N-acetylserine modification. 2 positions are modified to phosphoserine: Ser-2 and Ser-4. Positions 2 to 186 (SLSNKLTLDK…VGVNLPQKAG (185 aa)) are globular domain-1. Position 6 is an N6-succinyllysine (Lys-6). Residue Lys-11 is modified to N6-acetyllysine. Residues Val-23, Asp-24, Phe-25, Asn-26, Gln-38, and Arg-39 each coordinate (2R)-3-phosphoglycerate. The segment at 38 to 43 (QRIKAA) is mitochondrial targeting region exposed following cis-trans isomerization by PIN1 and recognized by the TOM complex for mitochondrial translocation of the protein. Lys-48 is subject to N6-acetyllysine; alternate. Lys-48 is subject to N6-succinyllysine; alternate. Positions 62, 63, 65, and 66 each coordinate (2R)-3-phosphoglycerate. Lys-75 carries the post-translational modification N6-acetyllysine. A Phosphotyrosine modification is found at Tyr-76. Residues Lys-86 and Lys-91 each carry the N6-acetyllysine modification. At Lys-97 the chain carries N6-acetyllysine; alternate. An N6-(2-hydroxyisobutyryl)lysine; alternate modification is found at Lys-97. (2R)-3-phosphoglycerate contacts are provided by Leu-122 and Arg-123. Lys-131 is modified (N6-acetyllysine; alternate). At Lys-131 the chain carries N6-malonyllysine; alternate. Residue Lys-146 is modified to N6-acetyllysine. 2 residues coordinate (2R)-3-phosphoglycerate: His-170 and Arg-171. The interval 187-190 (GFLM) is linker. Lys-191 is modified (N6-succinyllysine). The globular domain-2 stretch occupies residues 191–417 (KKELNYFAKA…LPGVDALSNV (227 aa)). Tyr-196 carries the phosphotyrosine modification. N6-acetyllysine is present on Lys-199. A Phosphoserine modification is found at Ser-203. Gly-214 is an ADP binding site. Gly-214 is a CDP binding site. 2 residues coordinate AMP: Ala-215 and Lys-216. Residue Ala-215 coordinates ATP. Ala-215 is a Mg(2+) binding site. The residue at position 216 (Lys-216) is an N6-(2-hydroxyisobutyryl)lysine. Mg(2+)-binding residues include Ala-218 and Asp-219. Asp-219 lines the CDP pocket. Position 220 (Lys-220) interacts with AMP. Lys-220 contributes to the ATP binding site. Lys-220 bears the N6-(2-hydroxyisobutyryl)lysine mark. ADP is bound at residue Gly-238. Gly-238 is a binding site for CDP. Gly-239 contributes to the AMP binding site. Gly-239 contributes to the ATP binding site. Residues Lys-267 and Lys-291 each carry the N6-acetyllysine modification. Gly-313 lines the AMP pocket. Gly-313 contributes to the ATP binding site. The residue at position 323 (Lys-323) is an N6-(2-hydroxyisobutyryl)lysine. Residues Gly-338, Val-340, and Phe-343 each coordinate CDP. Phe-343 contacts ADP. Residue Glu-344 coordinates AMP. Glu-344 serves as a coordination point for ATP. Lys-361 bears the N6-acetyllysine mark. ATP is bound by residues Asp-375 and Thr-376. Asp-375 contributes to the Mg(2+) binding site. The segment at 406–417 (KVLPGVDALSNV) is associated with globular domain 1.

This sequence belongs to the phosphoglycerate kinase family. Monomer. Interacts with kinase MAPK1/ERK2; the interaction is direct, occurs under hypoxic conditions, and promotes its interaction with PIN1. Interacts with peptidyl-prolyl cis-trans isomerase PIN1; the interaction is direct, occurs under hypoxic conditions, and targets the protein to the mitochondrion by promoting interactions with the TOM complex. Interacts with mitochondrial circRNA mcPGK1 (via its 2nd stem-loop); the interaction is direct and targets the protein to the mitochondrion by promoting interactions with the TOM complex. Interacts with pyruvate dehydrogenase kinase PDK1; the interaction is direct, occurs under hypoxic conditions and leads to PDK1-mediated inhibition of pyruvate dehydrogenase complex activity. Mg(2+) is required as a cofactor. Post-translationally, phosphorylated at Ser-203 by MAPK1/ERK2 under hypoxic conditions, which promotes its mitochondrial targeting.

It is found in the cytoplasm. The protein resides in the cytosol. Its subcellular location is the mitochondrion matrix. It carries out the reaction (2R)-3-phosphoglycerate + ATP = (2R)-3-phospho-glyceroyl phosphate + ADP. The enzyme catalyses L-seryl-[protein] + ATP = O-phospho-L-seryl-[protein] + ADP + H(+). The protein operates within carbohydrate degradation; glycolysis; pyruvate from D-glyceraldehyde 3-phosphate: step 2/5. Functionally, catalyzes one of the two ATP producing reactions in the glycolytic pathway via the reversible conversion of 1,3-diphosphoglycerate to 3-phosphoglycerate. Both L- and D- forms of purine and pyrimidine nucleotides can be used as substrates, but the activity is much lower on pyrimidines. In addition to its role as a glycolytic enzyme, it seems that PGK-1 acts as a polymerase alpha cofactor protein (primer recognition protein). Acts as a protein kinase when localized to the mitochondrion where it phosphorylates pyruvate dehydrogenase kinase PDK1 to inhibit pyruvate dehydrogenase complex activity and suppress the formation of acetyl-coenzyme A from pyruvate, and consequently inhibit oxidative phosphorylation and promote glycolysis. May play a role in sperm motility. This is Phosphoglycerate kinase 1 (PGK1) from Equus caballus (Horse).